We begin with the raw amino-acid sequence, 312 residues long: Putative tricarboxylate transport protein, mitochondrial (312 aa).

3 Solcar repeats span residues 23–111 (EKTV…LKSQ), 122–208 (VMRL…LKDW), and 218–303 (ISKP…IIEF). 6 helical membrane-spanning segments follow: residues 29–49 (IVIG…TEYV), 75–95 (VNGH…YGSI), 126–146 (LCGL…METV), 164–184 (FVHG…YKGV), 221–241 (PIVG…NTPI), and 286–306 (VCLD…FLDV).

It belongs to the mitochondrial carrier (TC 2.A.29) family.

Its subcellular location is the mitochondrion inner membrane. Functionally, transport of citrate across inner mitochondrial membrane. The chain is Putative tricarboxylate transport protein, mitochondrial from Caenorhabditis elegans.